The sequence spans 343 residues: S-adenosylmethionine:tRNA ribosyltransferase-isomerase (343 aa).

The protein belongs to the QueA family. Monomer.

It localises to the cytoplasm. The enzyme catalyses 7-aminomethyl-7-carbaguanosine(34) in tRNA + S-adenosyl-L-methionine = epoxyqueuosine(34) in tRNA + adenine + L-methionine + 2 H(+). It functions in the pathway tRNA modification; tRNA-queuosine biosynthesis. Its function is as follows. Transfers and isomerizes the ribose moiety from AdoMet to the 7-aminomethyl group of 7-deazaguanine (preQ1-tRNA) to give epoxyqueuosine (oQ-tRNA). The protein is S-adenosylmethionine:tRNA ribosyltransferase-isomerase of Natranaerobius thermophilus (strain ATCC BAA-1301 / DSM 18059 / JW/NM-WN-LF).